The following is a 277-amino-acid chain: Large ribosomal subunit protein uL2 (277 aa).

Positions 222-277 (GVAMNPVDHPHGGGEGRTSGGRHPVTPWGKPTKGKKTRSNKATDKFIMRSRHQRKK) are disordered.

It belongs to the universal ribosomal protein uL2 family. Part of the 50S ribosomal subunit. Forms a bridge to the 30S subunit in the 70S ribosome.

Its function is as follows. One of the primary rRNA binding proteins. Required for association of the 30S and 50S subunits to form the 70S ribosome, for tRNA binding and peptide bond formation. It has been suggested to have peptidyltransferase activity; this is somewhat controversial. Makes several contacts with the 16S rRNA in the 70S ribosome. The sequence is that of Large ribosomal subunit protein uL2 from Brucella abortus (strain S19).